A 320-amino-acid polypeptide reads, in one-letter code: Beta-ketoacyl-[acyl-carrier-protein] synthase III (320 aa).

Residues C114 and H247 contribute to the active site. Residues 248 to 252 are ACP-binding; the sequence is QANRR. N277 is a catalytic residue.

The protein belongs to the thiolase-like superfamily. FabH family. In terms of assembly, homodimer.

It is found in the cytoplasm. The catalysed reaction is malonyl-[ACP] + acetyl-CoA + H(+) = 3-oxobutanoyl-[ACP] + CO2 + CoA. It functions in the pathway lipid metabolism; fatty acid biosynthesis. In terms of biological role, catalyzes the condensation reaction of fatty acid synthesis by the addition to an acyl acceptor of two carbons from malonyl-ACP. Catalyzes the first condensation reaction which initiates fatty acid synthesis and may therefore play a role in governing the total rate of fatty acid production. Possesses both acetoacetyl-ACP synthase and acetyl transacylase activities. Its substrate specificity determines the biosynthesis of branched-chain and/or straight-chain of fatty acids. The chain is Beta-ketoacyl-[acyl-carrier-protein] synthase III from Neisseria gonorrhoeae (strain ATCC 700825 / FA 1090).